Consider the following 205-residue polypeptide: Holliday junction branch migration complex subunit RuvA (205 aa).

The segment at 1–65 is domain I; that stretch reads MIGRLRGAVA…SAGLRLYGFL (65 aa). The interval 66–144 is domain II; it reads TREDRRAFVL…TDGPVLMSAP (79 aa). Residues 145 to 153 form a flexible linker region; sequence TSSAPSAPA. A domain III region spans residues 153 to 205; the sequence is AKPAPTGDAVAALMGLGVAEVNARRVVEAAAAELGEEATVQALIKAGLKELGR.

This sequence belongs to the RuvA family. In terms of assembly, homotetramer. Forms an RuvA(8)-RuvB(12)-Holliday junction (HJ) complex. HJ DNA is sandwiched between 2 RuvA tetramers; dsDNA enters through RuvA and exits via RuvB. An RuvB hexamer assembles on each DNA strand where it exits the tetramer. Each RuvB hexamer is contacted by two RuvA subunits (via domain III) on 2 adjacent RuvB subunits; this complex drives branch migration. In the full resolvosome a probable DNA-RuvA(4)-RuvB(12)-RuvC(2) complex forms which resolves the HJ.

The protein localises to the cytoplasm. Functionally, the RuvA-RuvB-RuvC complex processes Holliday junction (HJ) DNA during genetic recombination and DNA repair, while the RuvA-RuvB complex plays an important role in the rescue of blocked DNA replication forks via replication fork reversal (RFR). RuvA specifically binds to HJ cruciform DNA, conferring on it an open structure. The RuvB hexamer acts as an ATP-dependent pump, pulling dsDNA into and through the RuvAB complex. HJ branch migration allows RuvC to scan DNA until it finds its consensus sequence, where it cleaves and resolves the cruciform DNA. The sequence is that of Holliday junction branch migration complex subunit RuvA from Caulobacter vibrioides (strain ATCC 19089 / CIP 103742 / CB 15) (Caulobacter crescentus).